Here is an 861-residue protein sequence, read N- to C-terminus: Isoleucine--tRNA ligase (861 aa).

The 'HIGH' region motif lies at 57 to 67 (PYANGNIHVGH). Glu-549 lines the L-isoleucyl-5'-AMP pocket. Residues 590–594 (KMSKS) carry the 'KMSKS' region motif. Lys-593 serves as a coordination point for ATP.

The protein belongs to the class-I aminoacyl-tRNA synthetase family. IleS type 1 subfamily. In terms of assembly, monomer.

Its subcellular location is the cytoplasm. The enzyme catalyses tRNA(Ile) + L-isoleucine + ATP = L-isoleucyl-tRNA(Ile) + AMP + diphosphate. Its function is as follows. Catalyzes the attachment of isoleucine to tRNA(Ile). As IleRS can inadvertently accommodate and process structurally similar amino acids such as valine, to avoid such errors it has two additional distinct tRNA(Ile)-dependent editing activities. One activity is designated as 'pretransfer' editing and involves the hydrolysis of activated Val-AMP. The other activity is designated 'posttransfer' editing and involves deacylation of mischarged Val-tRNA(Ile). The protein is Isoleucine--tRNA ligase of Mycoplasma pneumoniae (strain ATCC 29342 / M129 / Subtype 1) (Mycoplasmoides pneumoniae).